The primary structure comprises 166 residues: MNNCIKVVPIALRCQQRTISTSSVLEGKRNFRKFNAYNKRGTRVVKEAQKTLANPPVAIHKRGVRDTGILVDGQYVEIPEKIPDIIVPDLTGCKLKPYVSYKAPDVVQSEFTSLDLFNAVYSQKIIEDFKAGKLQKDGSAKEPSVNEQLTPEEALQRARKTGSDIF.

The transit peptide at 1–26 (MNNCIKVVPIALRCQQRTISTSSVLE) directs the protein to the mitochondrion. Residues 136–166 (KDGSAKEPSVNEQLTPEEALQRARKTGSDIF) are disordered.

Belongs to the mitochondrion-specific ribosomal protein mL41 family. Component of the mitochondrial ribosome large subunit (39S) which comprises a 16S rRNA and about 50 distinct proteins.

Its subcellular location is the mitochondrion. The protein is Large ribosomal subunit protein mL41 (mRpL41) of Drosophila melanogaster (Fruit fly).